The sequence spans 315 residues: Acetaldehyde dehydrogenase 2 (315 aa).

15-18 (SGNI) provides a ligand contact to NAD(+). The active-site Acyl-thioester intermediate is the cysteine 135. NAD(+) is bound by residues 166–174 (SAGPGTRAN) and asparagine 293.

Belongs to the acetaldehyde dehydrogenase family.

It carries out the reaction acetaldehyde + NAD(+) + CoA = acetyl-CoA + NADH + H(+). The chain is Acetaldehyde dehydrogenase 2 from Paraburkholderia phymatum (strain DSM 17167 / CIP 108236 / LMG 21445 / STM815) (Burkholderia phymatum).